The primary structure comprises 401 residues: Argininosuccinate synthase (401 aa).

8–16 contacts ATP; it reads AYSGGLDTS. Tyrosine 85 serves as a coordination point for L-citrulline. Residue glycine 115 participates in ATP binding. Residues threonine 117, asparagine 121, and aspartate 122 each contribute to the L-aspartate site. Position 121 (asparagine 121) interacts with L-citrulline. Positions 125, 173, 258, and 270 each coordinate L-citrulline.

The protein belongs to the argininosuccinate synthase family. Type 1 subfamily. In terms of assembly, homotetramer.

It is found in the cytoplasm. The catalysed reaction is L-citrulline + L-aspartate + ATP = 2-(N(omega)-L-arginino)succinate + AMP + diphosphate + H(+). It participates in amino-acid biosynthesis; L-arginine biosynthesis; L-arginine from L-ornithine and carbamoyl phosphate: step 2/3. The sequence is that of Argininosuccinate synthase from Staphylococcus aureus (strain Mu3 / ATCC 700698).